Reading from the N-terminus, the 142-residue chain is Aspartate 1-decarboxylase (142 aa).

The active-site Schiff-base intermediate with substrate; via pyruvic acid is serine 25. Position 25 is a pyruvic acid (Ser) (serine 25). Position 57 (threonine 57) interacts with substrate. Tyrosine 58 acts as the Proton donor in catalysis. 73 to 75 (GAA) contacts substrate.

The protein belongs to the PanD family. Heterooctamer of four alpha and four beta subunits. Pyruvate serves as cofactor. Post-translationally, is synthesized initially as an inactive proenzyme, which is activated by self-cleavage at a specific serine bond to produce a beta-subunit with a hydroxyl group at its C-terminus and an alpha-subunit with a pyruvoyl group at its N-terminus.

The protein resides in the cytoplasm. The enzyme catalyses L-aspartate + H(+) = beta-alanine + CO2. It participates in cofactor biosynthesis; (R)-pantothenate biosynthesis; beta-alanine from L-aspartate: step 1/1. Its function is as follows. Catalyzes the pyruvoyl-dependent decarboxylation of aspartate to produce beta-alanine. The chain is Aspartate 1-decarboxylase from Arthrobacter sp. (strain FB24).